The chain runs to 240 residues: Probable 2-phosphosulfolactate phosphatase (240 aa).

Belongs to the ComB family. It depends on Mg(2+) as a cofactor.

The catalysed reaction is (2R)-O-phospho-3-sulfolactate + H2O = (2R)-3-sulfolactate + phosphate. This is Probable 2-phosphosulfolactate phosphatase from Clostridium kluyveri (strain NBRC 12016).